Here is a 69-residue protein sequence, read N- to C-terminus: DNA-directed RNA polymerase subunit omega (69 aa).

It belongs to the RNA polymerase subunit omega family. In terms of assembly, the RNAP catalytic core consists of 2 alpha, 1 beta, 1 beta' and 1 omega subunit. When a sigma factor is associated with the core the holoenzyme is formed, which can initiate transcription.

It carries out the reaction RNA(n) + a ribonucleoside 5'-triphosphate = RNA(n+1) + diphosphate. Its function is as follows. Promotes RNA polymerase assembly. Latches the N- and C-terminal regions of the beta' subunit thereby facilitating its interaction with the beta and alpha subunits. This Heliobacterium modesticaldum (strain ATCC 51547 / Ice1) protein is DNA-directed RNA polymerase subunit omega.